The following is a 546-amino-acid chain: MTPGEVRRLYFIIRTFLSYGLDELIPKMRITLPLRLWRYSLFWMPNRHKDKPLGERLRLALQELGPVWIKFGQMLSTRRDLFPPHIADQLALLQDKVAPFDGRLAKQQIEAAMGGLPVEAWFDDFDIKPLASASIAQVHTARLKSNGKEVVIKVIRPDILPVIKADLKLIYRLARWVPRLLPDGRRLRPTEVVREYEKTLIDELNLLRESANAIQLRRNFEDSPMLYIPEVYPDYCSEGMMVMERIYGIPVSDVAALEKNGTNMKLLAERGVQVFFTQVFRDSFFHADMHPGNIFVSYEHPENPKYIGIDCGIVGSLNKEDKRYLAENFIAFFNRDYRKVAELHVDSGWVPPDTNVEEFEFAIRTVCEPIFEKPLAEISFGHVLLNLFNTARRFNMEVQPQLVLLQKTLLYIEGVGRQLYPQLDLWKTAKPFLESWIKDQVGIPALVRALKEKAPFWVEKMPELPELVYDSLRQGKYLQHSVDKIARELQSNHVRQGQSRYLLGIGATLVLSGTFLLVSRPEWGLMPGWLMAAGLVAWFVGWRKTR.

The 379-residue stretch at 124 to 502 (DFDIKPLASA…HVRQGQSRYL (379 aa)) folds into the Protein kinase domain. ATP contacts are provided by residues 130 to 138 (LASASIAQV) and Lys153. Asp288 (proton acceptor) is an active-site residue. 2 helical membrane-spanning segments follow: residues 501–521 (YLLG…VSRP) and 522–542 (EWGL…FVGW).

Belongs to the ABC1 family. UbiB subfamily.

The protein resides in the cell inner membrane. It participates in cofactor biosynthesis; ubiquinone biosynthesis [regulation]. Is probably a protein kinase regulator of UbiI activity which is involved in aerobic coenzyme Q (ubiquinone) biosynthesis. In Escherichia fergusonii (strain ATCC 35469 / DSM 13698 / CCUG 18766 / IAM 14443 / JCM 21226 / LMG 7866 / NBRC 102419 / NCTC 12128 / CDC 0568-73), this protein is Probable protein kinase UbiB.